Consider the following 182-residue polypeptide: Protein Syd (182 aa).

This sequence belongs to the Syd family.

It is found in the cell inner membrane. Functionally, interacts with the SecY protein in vivo. May bind preferentially to an uncomplexed state of SecY, thus functioning either as a chelating agent for excess SecY in the cell or as a regulatory factor that negatively controls the translocase function. In Pectobacterium atrosepticum (strain SCRI 1043 / ATCC BAA-672) (Erwinia carotovora subsp. atroseptica), this protein is Protein Syd.